The chain runs to 149 residues: Transcriptional repressor NrdR (149 aa).

A zinc finger lies at 3–34 (CPFCSENDTKVIDSRLVADGHQVRRRRQCLAC). The region spanning 49-139 (PKVIKSNGNR…VYRSFEDIRE (91 aa)) is the ATP-cone domain.

The protein belongs to the NrdR family. Requires Zn(2+) as cofactor.

Negatively regulates transcription of bacterial ribonucleotide reductase nrd genes and operons by binding to NrdR-boxes. The polypeptide is Transcriptional repressor NrdR (Vibrio vulnificus (strain YJ016)).